Consider the following 452-residue polypeptide: Maltoporin (452 aa).

The first 25 residues, 1–25 (MMITLRKLPLAVAVAAGVMSAQAMA), serve as a signal peptide directing secretion.

Belongs to the porin LamB (TC 1.B.3) family. As to quaternary structure, homotrimer formed of three 18-stranded antiparallel beta-barrels, containing three independent channels.

It localises to the cell outer membrane. It catalyses the reaction beta-maltose(in) = beta-maltose(out). Involved in the transport of maltose and maltodextrins. In Salmonella newport (strain SL254), this protein is Maltoporin.